A 207-amino-acid chain; its full sequence is Guanylate kinase (207 aa).

The Guanylate kinase-like domain occupies 4–184 (GILFIISAPS…AINDLRTIII (181 aa)). An ATP-binding site is contributed by 11-18 (APSGTGKS).

Belongs to the guanylate kinase family.

It localises to the cytoplasm. The catalysed reaction is GMP + ATP = GDP + ADP. Functionally, essential for recycling GMP and indirectly, cGMP. The chain is Guanylate kinase from Buchnera aphidicola subsp. Schizaphis graminum (strain Sg).